The primary structure comprises 78 residues: uncharacterized protein (78 aa).

2 helical membrane-spanning segments follow: residues 12–32 (LVSV…ICVV) and 51–71 (GVGA…VAVH).

The protein localises to the cell membrane. This is an uncharacterized protein from Treponema pallidum (strain Nichols).